Reading from the N-terminus, the 331-residue chain is UPF0194 membrane protein YbhG (331 aa).

The first 19 residues, 1 to 19 (MKKPVVIGLAIAAIVAVIA), serve as a signal peptide directing secretion. Residues 107-208 (EEIAQAAAAV…LDLQDTTLIA (102 aa)) are a coiled coil.

Belongs to the UPF0194 family.

Its subcellular location is the periplasm. This Salmonella paratyphi A (strain ATCC 9150 / SARB42) protein is UPF0194 membrane protein YbhG.